Here is a 425-residue protein sequence, read N- to C-terminus: Serine--tRNA ligase (425 aa).

2 disordered regions span residues 43-68 and 108-131; these read QRSS…GSDP and LPNL…RHCW. Residues 117–131 show a composition bias toward basic and acidic residues; that stretch reads PEGRDENDNQERHCW. 233–235 is an L-serine binding site; it reads TAE. Position 264 to 266 (264 to 266) interacts with ATP; sequence RRE. E287 lines the L-serine pocket. 351 to 354 serves as a coordination point for ATP; the sequence is EISS. L-serine is bound at residue S385.

Belongs to the class-II aminoacyl-tRNA synthetase family. Type-1 seryl-tRNA synthetase subfamily. As to quaternary structure, homodimer. The tRNA molecule binds across the dimer.

The protein resides in the cytoplasm. The enzyme catalyses tRNA(Ser) + L-serine + ATP = L-seryl-tRNA(Ser) + AMP + diphosphate + H(+). The catalysed reaction is tRNA(Sec) + L-serine + ATP = L-seryl-tRNA(Sec) + AMP + diphosphate + H(+). Its pathway is aminoacyl-tRNA biosynthesis; selenocysteinyl-tRNA(Sec) biosynthesis; L-seryl-tRNA(Sec) from L-serine and tRNA(Sec): step 1/1. In terms of biological role, catalyzes the attachment of serine to tRNA(Ser). Is also able to aminoacylate tRNA(Sec) with serine, to form the misacylated tRNA L-seryl-tRNA(Sec), which will be further converted into selenocysteinyl-tRNA(Sec). In Prochlorococcus marinus (strain MIT 9303), this protein is Serine--tRNA ligase.